We begin with the raw amino-acid sequence, 277 residues long: Large ribosomal subunit protein uL2 (277 aa).

A disordered region spans residues S211–K277.

The protein belongs to the universal ribosomal protein uL2 family. In terms of assembly, part of the 50S ribosomal subunit. Forms a bridge to the 30S subunit in the 70S ribosome.

Functionally, one of the primary rRNA binding proteins. Required for association of the 30S and 50S subunits to form the 70S ribosome, for tRNA binding and peptide bond formation. It has been suggested to have peptidyltransferase activity; this is somewhat controversial. Makes several contacts with the 16S rRNA in the 70S ribosome. The sequence is that of Large ribosomal subunit protein uL2 from Staphylococcus epidermidis (strain ATCC 35984 / DSM 28319 / BCRC 17069 / CCUG 31568 / BM 3577 / RP62A).